Reading from the N-terminus, the 219-residue chain is PRELI domain-containing protein 1, mitochondrial (219 aa).

The PRELI/MSF1 domain occupies 36 to 174; that stretch reads TEDIVHREVT…ILAKLQGEAP (139 aa).

In terms of assembly, forms a complex with TRIAP1 in the mitochondrion intermembrane space. Interacts with OPA1 and AIFM1.

It is found in the mitochondrion. Its subcellular location is the mitochondrion intermembrane space. The catalysed reaction is a 1,2-diacyl-sn-glycero-3-phosphate(in) = a 1,2-diacyl-sn-glycero-3-phosphate(out). In terms of biological role, involved in the modulation of the mitochondrial apoptotic pathway by ensuring the accumulation of cardiolipin (CL) in mitochondrial membranes. In vitro, the TRIAP1:PRELID1 complex mediates the transfer of phosphatidic acid (PA) between liposomes and probably functions as a PA transporter across the mitochondrion intermembrane space to provide PA for CL synthesis in the inner membrane. Regulates the mitochondrial apoptotic pathway in primary Th cells. Regulates Th cell differentiation by down-regulating STAT6 thereby reducing IL-4-induced Th2 cell number. May be important for the development of vital and immunocompetent organs. The chain is PRELI domain-containing protein 1, mitochondrial (PRELID1) from Bos taurus (Bovine).